We begin with the raw amino-acid sequence, 392 residues long: Neutrophil cytosol factor 1 (392 aa).

Residues 4-125 form the PX domain; the sequence is HFIRHIALLG…NFFKVRPDDL (122 aa). 2 consecutive SH3 domains span residues 156 to 215 and 226 to 285; these read IILQ…PLDS and YAGE…KAGQ. Residues 290-392 form a disordered region; it reads AKSQIKSRGA…STKRKLASAV (103 aa). Residues serine 304 and serine 305 each carry the phosphoserine modification. Positions 310–319 are enriched in basic residues; that stretch reads HSIHQRSRKR. 3 positions are modified to phosphoserine: serine 321, serine 329, and serine 348. Basic and acidic residues predominate over residues 376–385; it reads ILHRCSESTK.

As to quaternary structure, component of the phagocyte NADPH oxidase complex composed of an obligatory core heterodimer formed by the membrane proteins CYBA and CYBB and the cytosolic regulatory subunits NCF1/p47-phox, NCF2/p67-phox, NCF4/p40-phox and the small GTPase RAC1 or RAC2. Part of a cytosolic complex composed at least by NCF1, NCF2 and NCF4. Interacts (via C-terminus) with NCF2 (via the C-terminal SH3 domain). Interacts with NCF4. Interacts with CYBB. Interacts (via the second SH3 domain) with CYBA; interaction is phosphorylation-dependent. Interacts with NOXA1. Interacts with ADAM15. Interacts with TRAF4. Interacts with FASLG. Interacts with PARK7 (via C-terminus); the interaction is enhanced by LPS and modulates NCF1 phosphorylation and membrane translocation. In terms of processing, phosphorylated by PRKCD; phosphorylation induces activation of NCF1, leading to assembly and activation of the NADPH oxidase complex.

The protein localises to the cytoplasm. Its subcellular location is the cytosol. It is found in the membrane. Subunit of the phagocyte NADPH oxidase complex that mediates the transfer of electrons from cytosolic NADPH to O2 to produce the superoxide anion (O2(-)). In the activated complex, electrons are first transferred from NADPH to flavin adenine dinucleotide (FAD) and subsequently transferred via two heme molecules to molecular oxygen, producing superoxide through an outer-sphere reaction. Activation of the NADPH oxidase complex is initiated by the assembly of cytosolic subunits of the NADPH oxidase complex with the core NADPH oxidase complex to form a complex at the plasma membrane or phagosomal membrane. This activation process is initiated by phosphorylation dependent binding of the cytosolic NCF1/p47-phox subunit to the C-terminus of CYBA/p22-phox. The protein is Neutrophil cytosol factor 1 of Bos taurus (Bovine).